A 316-amino-acid polypeptide reads, in one-letter code: Glutathione synthetase (316 aa).

Residues 125–310 (KLFTAWFSDL…ITGMLMDAIE (186 aa)) form the ATP-grasp domain. Residue 151 to 207 (WEKHSDIILKPLDGMGGASIFRVKEGDPNLGVIAETLTEHGTCYCMAQNYLPAIKDG) participates in ATP binding. Mg(2+) contacts are provided by E281 and N283.

The protein belongs to the prokaryotic GSH synthase family. Requires Mg(2+) as cofactor. Mn(2+) serves as cofactor.

It carries out the reaction gamma-L-glutamyl-L-cysteine + glycine + ATP = glutathione + ADP + phosphate + H(+). It functions in the pathway sulfur metabolism; glutathione biosynthesis; glutathione from L-cysteine and L-glutamate: step 2/2. The protein is Glutathione synthetase of Shigella flexneri.